A 190-amino-acid polypeptide reads, in one-letter code: ATP synthase subunit b, chloroplastic (190 aa).

Residues 35 to 55 (LSVVLGVLIFFGKGVCASCLL) form a helical membrane-spanning segment.

The protein belongs to the ATPase B chain family. As to quaternary structure, F-type ATPases have 2 components, F(1) - the catalytic core - and F(0) - the membrane proton channel. F(1) has five subunits: alpha(3), beta(3), gamma(1), delta(1), epsilon(1). F(0) has four main subunits: a(1), b(1), b'(1) and c(10-14). The alpha and beta chains form an alternating ring which encloses part of the gamma chain. F(1) is attached to F(0) by a central stalk formed by the gamma and epsilon chains, while a peripheral stalk is formed by the delta, b and b' chains.

It localises to the plastid. Its subcellular location is the chloroplast thylakoid membrane. In terms of biological role, f(1)F(0) ATP synthase produces ATP from ADP in the presence of a proton or sodium gradient. F-type ATPases consist of two structural domains, F(1) containing the extramembraneous catalytic core and F(0) containing the membrane proton channel, linked together by a central stalk and a peripheral stalk. During catalysis, ATP synthesis in the catalytic domain of F(1) is coupled via a rotary mechanism of the central stalk subunits to proton translocation. Its function is as follows. Component of the F(0) channel, it forms part of the peripheral stalk, linking F(1) to F(0). The sequence is that of ATP synthase subunit b, chloroplastic from Coffea arabica (Arabian coffee).